The primary structure comprises 223 residues: MACLGFQRHKAQLNLATRTWPCTLLFFLLFIPVFCKAMHVAQPAVVLASSRGIASFVCEYASPGKATEVRVTVLRQADSQVTEVCAATYMMGNELTFLDDSICTGTSSGNQVNLTIQGLRAMDTGLYICKVELMYPPPYYLGIGNGTQIYVIDPEPCPDSDFLLWILAAVSSGLFFYSFLLTAVSLSKMLKKRSPLTTGVYVKMPPTEPECEKQFQPYFIPIN.

The N-terminal stretch at 1–35 (MACLGFQRHKAQLNLATRTWPCTLLFFLLFIPVFC) is a signal peptide. Residues 36–161 (KAMHVAQPAV…IDPEPCPDSD (126 aa)) lie on the Extracellular side of the membrane. Positions 39 to 140 (HVAQPAVVLA…VELMYPPPYY (102 aa)) constitute an Ig-like V-type domain. Positions 46–50 (VLASS) are homodimerization. 2 disulfide bridges follow: Cys58/Cys129 and Cys85/Cys103. A glycan (N-linked (GlcNAc...) asparagine) is linked at Asn113. An important for interaction with CD80 and CD86 region spans residues 134 to 139 (MYPPPY). An N-linked (GlcNAc...) asparagine glycan is attached at Asn145. The homodimerization stretch occupies residues 150–155 (YVIDPE). The helical transmembrane segment at 162–182 (FLLWILAAVSSGLFFYSFLLT) threads the bilayer. Over 183-223 (AVSLSKMLKKRSPLTTGVYVKMPPTEPECEKQFQPYFIPIN) the chain is Cytoplasmic. Position 201 is a phosphotyrosine; by TXK and JAK2 (Tyr201).

In terms of assembly, homodimer; disulfide-linked. Binds to CD80/B7-1 and CD86/B7.2. Interacts with ICOSLG. In terms of processing, N-glycosylation is important for dimerization. Phosphorylation at Tyr-201 prevents binding to the AP-2 adapter complex, blocks endocytosis, and leads to retention of CTLA4 on the cell surface. As to expression, widely expressed with highest levels in lymphoid tissues. Detected in activated T-cells where expression levels are 30- to 50-fold less than CD28, the stimulatory coreceptor, on the cell surface following activation.

Its subcellular location is the cell membrane. Functionally, inhibitory receptor acting as a major negative regulator of T-cell responses. The affinity of CTLA4 for its natural B7 family ligands, CD80 and CD86, is considerably stronger than the affinity of their cognate stimulatory coreceptor CD28. The protein is Cytotoxic T-lymphocyte protein 4 (CTLA4) of Homo sapiens (Human).